A 156-amino-acid polypeptide reads, in one-letter code: Small ribosomal subunit protein uS7 (156 aa).

The protein belongs to the universal ribosomal protein uS7 family. Part of the 30S ribosomal subunit. Contacts proteins S9 and S11.

In terms of biological role, one of the primary rRNA binding proteins, it binds directly to 16S rRNA where it nucleates assembly of the head domain of the 30S subunit. Is located at the subunit interface close to the decoding center, probably blocks exit of the E-site tRNA. This chain is Small ribosomal subunit protein uS7, found in Clostridioides difficile (strain 630) (Peptoclostridium difficile).